A 162-amino-acid polypeptide reads, in one-letter code: Phenazine biosynthesis protein PhzB1 (162 aa).

It belongs to the PhzA/PhzB family. Homodimer.

Its pathway is antibiotic biosynthesis; phenazine biosynthesis. In terms of biological role, involved in the biosynthesis of the antibiotic phenazine, a nitrogen-containing heterocyclic molecule. PhzB1 (operon phzA1B1C1E1F1G1) has a role in the biosynthesis of the phenazine during planktonic growth. In Pseudomonas aeruginosa (strain ATCC 15692 / DSM 22644 / CIP 104116 / JCM 14847 / LMG 12228 / 1C / PRS 101 / PAO1), this protein is Phenazine biosynthesis protein PhzB1.